Here is a 296-residue protein sequence, read N- to C-terminus: 4-hydroxy-tetrahydrodipicolinate synthase (296 aa).

Thr-49 is a pyruvate binding site. The active-site Proton donor/acceptor is Tyr-137. The Schiff-base intermediate with substrate role is filled by Lys-165. Residue Val-207 participates in pyruvate binding.

This sequence belongs to the DapA family. In terms of assembly, homotetramer; dimer of dimers.

The protein localises to the cytoplasm. The catalysed reaction is L-aspartate 4-semialdehyde + pyruvate = (2S,4S)-4-hydroxy-2,3,4,5-tetrahydrodipicolinate + H2O + H(+). Its pathway is amino-acid biosynthesis; L-lysine biosynthesis via DAP pathway; (S)-tetrahydrodipicolinate from L-aspartate: step 3/4. Its function is as follows. Catalyzes the condensation of (S)-aspartate-beta-semialdehyde [(S)-ASA] and pyruvate to 4-hydroxy-tetrahydrodipicolinate (HTPA). This chain is 4-hydroxy-tetrahydrodipicolinate synthase, found in Nitrobacter hamburgensis (strain DSM 10229 / NCIMB 13809 / X14).